The primary structure comprises 458 residues: Gamma aminobutyrate transaminase 2 (458 aa).

114-115 (GS) contributes to the pyridoxal 5'-phosphate binding site. Residue Tyr-147 coordinates substrate. Asp-254 lines the pyridoxal 5'-phosphate pocket. Lys-283 provides a ligand contact to substrate. Lys-283 bears the N6-(pyridoxal phosphate)lysine mark.

This sequence belongs to the class-III pyridoxal-phosphate-dependent aminotransferase family. In terms of tissue distribution, expressed in leaves, roots, stems, flowers and fruits. Expressed in carpels, but not in stamens.

It localises to the cytoplasm. The enzyme catalyses 4-aminobutanoate + pyruvate = succinate semialdehyde + L-alanine. It carries out the reaction 4-aminobutanoate + glyoxylate = succinate semialdehyde + glycine. Functionally, transaminase that degrades gamma-amino butyric acid (GABA) and uses pyruvate or glyoxylate as amino-group acceptor. Cannot use beta-alanine, ornithine, acetylornithine, serine, glycine, asparagine, glutamine, glutamate, valine, leucine, isoleucine, methionine, phenylalanine, histidine, lysine, arginine, aspartate, threonine, tyrosine, tryptophan, proline, or cysteine as amino donors. May be responsible for establishing the GABA gradient in the carpel. The polypeptide is Gamma aminobutyrate transaminase 2 (GABA-TP2) (Solanum lycopersicum (Tomato)).